The sequence spans 499 residues: ATP synthase subunit alpha, chloroplastic (499 aa).

Residue 170–177 (GDRQTGKT) participates in ATP binding.

It belongs to the ATPase alpha/beta chains family. F-type ATPases have 2 components, CF(1) - the catalytic core - and CF(0) - the membrane proton channel. CF(1) has five subunits: alpha(3), beta(3), gamma(1), delta(1), epsilon(1). CF(0) has four main subunits: a, b, b' and c.

Its subcellular location is the plastid. It localises to the chloroplast thylakoid membrane. The catalysed reaction is ATP + H2O + 4 H(+)(in) = ADP + phosphate + 5 H(+)(out). Produces ATP from ADP in the presence of a proton gradient across the membrane. The alpha chain is a regulatory subunit. This chain is ATP synthase subunit alpha, chloroplastic, found in Emiliania huxleyi (Coccolithophore).